The primary structure comprises 168 residues: MRIGTGYDLHRLVKGRRLVLGGVALPFEKGLDGHSDADVLVHAVCDALLGAAGLGDIGDHFPDTDARFKGVSSLLLLTETGRMLKEKGFFVVNIDATVLAQAPKLGAHKAAMAANMATALGIDAACVNVKATTTEGLDAVGRGEAMAAMSVALIIEEEARDSRGQGAG.

2 residues coordinate a divalent metal cation: D8 and H10. Residues D8–H10 and H34–S35 contribute to the 4-CDP-2-C-methyl-D-erythritol 2-phosphate site. An a divalent metal cation-binding site is contributed by H42. 4-CDP-2-C-methyl-D-erythritol 2-phosphate is bound by residues D56 to G58, F61 to D65, T132 to E135, and R142.

It belongs to the IspF family. As to quaternary structure, homotrimer. A divalent metal cation serves as cofactor.

The catalysed reaction is 4-CDP-2-C-methyl-D-erythritol 2-phosphate = 2-C-methyl-D-erythritol 2,4-cyclic diphosphate + CMP. It functions in the pathway isoprenoid biosynthesis; isopentenyl diphosphate biosynthesis via DXP pathway; isopentenyl diphosphate from 1-deoxy-D-xylulose 5-phosphate: step 4/6. In terms of biological role, involved in the biosynthesis of isopentenyl diphosphate (IPP) and dimethylallyl diphosphate (DMAPP), two major building blocks of isoprenoid compounds. Catalyzes the conversion of 4-diphosphocytidyl-2-C-methyl-D-erythritol 2-phosphate (CDP-ME2P) to 2-C-methyl-D-erythritol 2,4-cyclodiphosphate (ME-CPP) with a corresponding release of cytidine 5-monophosphate (CMP). The polypeptide is 2-C-methyl-D-erythritol 2,4-cyclodiphosphate synthase (Desulfosudis oleivorans (strain DSM 6200 / JCM 39069 / Hxd3) (Desulfococcus oleovorans)).